Consider the following 200-residue polypeptide: Pyridoxine/pyridoxamine 5'-phosphate oxidase (200 aa).

Residues 48–53, 63–64, Lys-70, and Gln-92 contribute to the FMN site; these read RMVLLK and YT. Lys-53 lines the substrate pocket. Residues Tyr-110, Arg-114, and Ser-118 each coordinate substrate. Residues 127–128 and Trp-171 each bind FMN; that span reads QS. 177–179 serves as a coordination point for substrate; that stretch reads RLH. Residue Arg-181 coordinates FMN.

The protein belongs to the pyridoxamine 5'-phosphate oxidase family. As to quaternary structure, homodimer. FMN serves as cofactor.

The enzyme catalyses pyridoxamine 5'-phosphate + O2 + H2O = pyridoxal 5'-phosphate + H2O2 + NH4(+). It catalyses the reaction pyridoxine 5'-phosphate + O2 = pyridoxal 5'-phosphate + H2O2. The protein operates within cofactor metabolism; pyridoxal 5'-phosphate salvage; pyridoxal 5'-phosphate from pyridoxamine 5'-phosphate: step 1/1. It functions in the pathway cofactor metabolism; pyridoxal 5'-phosphate salvage; pyridoxal 5'-phosphate from pyridoxine 5'-phosphate: step 1/1. Functionally, catalyzes the oxidation of either pyridoxine 5'-phosphate (PNP) or pyridoxamine 5'-phosphate (PMP) into pyridoxal 5'-phosphate (PLP). This Cereibacter sphaeroides (strain ATCC 17023 / DSM 158 / JCM 6121 / CCUG 31486 / LMG 2827 / NBRC 12203 / NCIMB 8253 / ATH 2.4.1.) (Rhodobacter sphaeroides) protein is Pyridoxine/pyridoxamine 5'-phosphate oxidase.